The following is a 285-amino-acid chain: tRNA uridine(34) hydroxylase (285 aa).

Positions 130 to 225 (RGDDVVFFDG…YGEAFGDTGL (96 aa)) constitute a Rhodanese domain. The Cysteine persulfide intermediate role is filled by C185.

This sequence belongs to the TrhO family.

The enzyme catalyses uridine(34) in tRNA + AH2 + O2 = 5-hydroxyuridine(34) in tRNA + A + H2O. Functionally, catalyzes oxygen-dependent 5-hydroxyuridine (ho5U) modification at position 34 in tRNAs. The polypeptide is tRNA uridine(34) hydroxylase (Rhodococcus jostii (strain RHA1)).